Consider the following 194-residue polypeptide: BCL2/adenovirus E1B 19 kDa protein-interacting protein 3 (194 aa).

Residues 1–102 (MSQNGAPGMQ…SQSEEDDIER (102 aa)) form a disordered region. A compositionally biased stretch (basic and acidic residues) spans 42–55 (DMEKILLDAQHESG). A phosphoserine mark is found at serine 54, serine 66, serine 86, serine 92, and serine 95. Residues 56–69 (RSSSKSSHCDSPPR) show a composition bias toward low complexity. The span at 78-88 (RASETDTHSIG) shows a compositional bias: basic and acidic residues. Residues 100–125 (IERRKEVESILKKNSDWIWDWSSRPE) carry the BH3 motif. The chain crosses the membrane as a helical span at residues 164-184 (VFLPSLLLSHLLAIGLGIYIG).

It belongs to the NIP3 family. Homodimer. Binds to BCL2. Interacts with BNIP3L and ACAA2. Interacts (via BH3 domain) with SPATA18 (via coiled-coil domains). Interacts with BOK; promotes BOK oligomerization. Interacts with PPTC7; this interaction promotes BNIP3 degradation. As to quaternary structure, (Microbial infection) Interacts with adenovirus E1B 19 kDa protein. In terms of assembly, (Microbial infection) Interacts with Epstein-Barr virus BHRF1.

It is found in the mitochondrion. It localises to the mitochondrion outer membrane. Apoptosis-inducing protein that can overcome BCL2 suppression. May play a role in repartitioning calcium between the two major intracellular calcium stores in association with BCL2. Involved in mitochondrial quality control via its interaction with SPATA18/MIEAP: in response to mitochondrial damage, participates in mitochondrial protein catabolic process (also named MALM) leading to the degradation of damaged proteins inside mitochondria. The physical interaction of SPATA18/MIEAP, BNIP3 and BNIP3L/NIX at the mitochondrial outer membrane regulates the opening of a pore in the mitochondrial double membrane in order to mediate the translocation of lysosomal proteins from the cytoplasm to the mitochondrial matrix. Plays an important role in the calprotectin (S100A8/A9)-induced cell death pathway. This is BCL2/adenovirus E1B 19 kDa protein-interacting protein 3 from Homo sapiens (Human).